The primary structure comprises 156 residues: uncharacterized protein (156 aa).

This is an uncharacterized protein from Aedes vexans (Inland floodwater mosquito).